The primary structure comprises 151 residues: MNSLHAHLLLLAVCCVGYIASSPVIGQDQRSGDSDADVLLAADEMADNGGDNIDKRVERYAFGLGRRAYMYTNGGPGMKRLPVYNFGLGKRSRPYSFGLGKRSDYDYDQDNEIDYRVPPANYLAAERAVRPGRQNKRTTRPQPFNFGLGRR.

Residues 1-21 form the signal peptide; sequence MNSLHAHLLLLAVCCVGYIAS. Residues 22-54 constitute a propeptide that is removed on maturation; it reads SPVIGQDQRSGDSDADVLLAADEMADNGGDNID. Leucine 64, leucine 88, and leucine 99 each carry leucine amide. Positions 103–135 are excised as a propeptide; the sequence is SDYDYDQDNEIDYRVPPANYLAAERAVRPGRQN. Residues 131 to 151 are disordered; sequence PGRQNKRTTRPQPFNFGLGRR. Leucine 148 carries the leucine amide modification.

It belongs to the allatostatin family.

It is found in the secreted. May act as a neurotransmitter or neuromodulator. The chain is Allatostatin-A (AstA) from Drosophila melanogaster (Fruit fly).